Consider the following 165-residue polypeptide: Bark lectin isoform 2 (165 aa).

Residues asparagine 27 and asparagine 57 are each glycosylated (N-linked (GlcNAc...) asparagine). 2 disulfide bridges follow: cysteine 33–cysteine 80 and cysteine 126–cysteine 133.

It belongs to the protease inhibitor I3 (leguminous Kunitz-type inhibitor) family. In terms of assembly, dimer.

Functionally, glucose and N-acetylglucosamine binding lectin. Has hemagglutinating activity against human and rabbit erythrocytes which does not require divalent cations. Inhibits factor Xa and, to a lesser extent, trypsin. Does not inhibit neutrophil elastase, human plasma kallikrein, papain, human plasmin, porcine pancreatic kallikrein and bovin chymotrypsin. Has insecticidal activity against the termite species N.corniger. Induces apoptosis in prostrate cancer cell lines DU145 and PC3. This is Bark lectin isoform 2 from Crateva tapia (Garlic-pear tree).